Reading from the N-terminus, the 312-residue chain is DNA primase small subunit PriS (312 aa).

Active-site residues include D88, D90, and D215.

This sequence belongs to the eukaryotic-type primase small subunit family. As to quaternary structure, heterodimer of a small subunit (PriS) and a large subunit (PriL). Requires Mg(2+) as cofactor. It depends on Mn(2+) as a cofactor.

Catalytic subunit of DNA primase, an RNA polymerase that catalyzes the synthesis of short RNA molecules used as primers for DNA polymerase during DNA replication. The small subunit contains the primase catalytic core and has DNA synthesis activity on its own. Binding to the large subunit stabilizes and modulates the activity, increasing the rate of DNA synthesis while decreasing the length of the DNA fragments, and conferring RNA synthesis capability. The DNA polymerase activity may enable DNA primase to also catalyze primer extension after primer synthesis. May also play a role in DNA repair. This is DNA primase small subunit PriS from Pyrobaculum aerophilum (strain ATCC 51768 / DSM 7523 / JCM 9630 / CIP 104966 / NBRC 100827 / IM2).